The following is a 3616-amino-acid chain: Replicase polyprotein 1ab (3616 aa).

The C4-type; atypical zinc finger occupies 8 to 28 (CLCTPNARVFWEHGQVYCTRC). In terms of domain architecture, Peptidase C31 spans 69–181 (ECRPGGLCWL…KGLCPFSDAR (113 aa)). Catalysis depends on for Nsp1-alpha papain-like cysteine proteinase activity residues Cys-76 and His-147. Positions 262 to 381 (NDTKFSKCWE…FRFQTRKYYG (120 aa)) constitute a Peptidase C32 domain. Residues Cys-269 and His-340 each act as for Nsp1-beta papain-like cysteine proteinase activity in the active site. Residues 381–486 (GYSPPGDGAC…RGVCGGECKF (106 aa)) form the Peptidase C33 domain. Catalysis depends on for Nsp2 cysteine proteinase activity residues Cys-390 and His-456. Disordered stretches follow at residues 672–706 (SRAL…REVP) and 883–912 (PLKS…GAPR). The span at 676-690 (KSAKPKRKRNKKKKT) shows a compositional bias: basic residues. Residues 903–912 (DQLSQDGAPR) are compositionally biased toward polar residues. 9 consecutive transmembrane segments (helical) span residues 942-962 (WLNH…SVVL), 977-997 (LFCL…FIPL), 1010-1030 (LSVF…VLPE), 1060-1080 (HIGV…VGGP), 1085-1105 (FYFL…AVAL), 1289-1309 (VADF…SAWL), 1364-1384 (ALMI…SLLV), 1386-1406 (VICV…VIAF), and 1425-1445 (VQFF…VILI). Residues 981–1105 (CCVLLCFHFP…LGLVFLAVAL (125 aa)) are HD1. An HD2 region spans residues 1289 to 1448 (VADFVCLGLY…AVAVILISSW (160 aa)). The Peptidase S32 domain occupies 1513–1714 (GSLRTRGCAK…AVVESLPTPE (202 aa)). Residues His-1551, Asp-1576, and Ser-1628 each act as charge relay system; for 3C-like serine proteinase activity in the active site. 4 helical membrane-spanning segments follow: residues 1715-1735 (GALS…LIHV), 1737-1757 (FVPV…VVLA), 1761-1781 (FSFA…VLLL), and 1832-1852 (SKEI…LSLF). An HD3 region spans residues 1737-1852 (FVPVIAVAFF…HVLALLLSLF (116 aa)). Residues 2194 to 2352 (SLNGLQQSSA…LPYKLHPVRG (159 aa)) form the NiRAN domain. One can recognise a RdRp catalytic domain in the interval 2590–2724 (GRCLEADLAS…YNESDELPNY (135 aa)). The region spanning 2844 to 2907 (KKKCRTCAHC…SSAMNLNTEL (64 aa)) is the AV ZBD domain. Zn(2+)-binding residues include Cys-2850, Cys-2853, Cys-2863, Cys-2868, His-2871, His-2873, His-2875, His-2877, Cys-2884, His-2886, Cys-2893, and Cys-2896. A (+)RNA virus helicase ATP-binding domain is found at 2964–3116 (QVMKVAQTCA…AFSLMPGRQL (153 aa)). 2992 to 2999 (GAPGTGKT) contributes to the ATP binding site. One can recognise a (+)RNA virus helicase C-terminal domain in the interval 3117–3248 (IEVFRFGPAV…CGDQPKMIVG (132 aa)). Residues 3272 to 3368 (EGTASPLPQV…LTKYLKGESV (97 aa)) form the AV-Nsp11N/CoV-Nsp15M domain. The NendoU domain maps to 3370 to 3492 (LPDSIMSTGR…MVWKDATAYF (123 aa)).

This sequence belongs to the arteriviridae polyprotein family. In terms of processing, specific enzymatic cleavages in vivo by its own proteases yield mature proteins. There are two alternative pathways for processing. Either nsp4-5 is cleaved, which represents the major pathway or the nsp5-6 and nsp6-7 are processed, which represents the minor pathway. The major pathway occurs when nsp2 acts as a cofactor for nsp4.

The protein resides in the host membrane. The protein localises to the host cytoplasm. Its subcellular location is the host perinuclear region. It carries out the reaction RNA(n) + a ribonucleoside 5'-triphosphate = RNA(n+1) + diphosphate. It catalyses the reaction ATP + H2O = ADP + phosphate + H(+). The enzyme catalyses uridylyl-uridylyl-ribonucleotide-RNA = a 3'-end uridylyl-2',3'-cyclophospho-uridine-RNA + a 5'-end dephospho-ribonucleoside-RNA. In terms of biological role, the replicase polyprotein 1ab is a multifunctional protein: it contains the activities necessary for the transcription of negative stranded RNA, leader RNA, subgenomic mRNAs and progeny virion RNA as well as proteinases responsible for the cleavage of the polyprotein into functional products. Functionally, the Nsp1 chain is essential for viral subgenomic mRNA synthesis. The 3C-like serine proteinase chain is responsible for the majority of cleavages as it cleaves the C-terminus of the polyprotein. Its function is as follows. The helicase chain, which contains a zinc finger structure, displays RNA and DNA duplex-unwinding activities with 5' to 3' polarity. In terms of biological role, plays a role in viral transcription/replication and prevents the simultaneous activation of host cell dsRNA sensors, such as MDA5/IFIH1, OAS, and PKR. Acts by degrading the 5'-polyuridines generated during replication of the poly(A) region of viral genomic and subgenomic RNAs. Catalyzes a two-step reaction in which a 2'3'-cyclic phosphate (2'3'-cP) is first generated by 2'-O transesterification, which is then hydrolyzed to a 3'-phosphate (3'-P). If not degraded, poly(U) RNA would hybridize with poly(A) RNA tails and activate host dsRNA sensors. This chain is Replicase polyprotein 1ab (rep), found in Mus musculus domesticus (western European house mouse).